A 606-amino-acid chain; its full sequence is NADH-ubiquinone oxidoreductase chain 5 (606 aa).

The next 16 membrane-spanning stretches (helical) occupy residues 4–24 (FSSL…SSIL), 38–58 (NIIS…IHSG), 87–107 (MIFV…SLWY), 117–137 (FFKY…ANNL), 140–160 (LFIG…WWYG), 171–191 (AILY…WFLF), 211–233 (LPLL…HPWL), 241–261 (TPVS…FLLI), 273–293 (IQSL…ICAL), 301–320 (IIAF…IGIN), 325–347 (AFLH…GSII), 366–386 (MPFT…MPFL), 413–433 (LIAT…ALLG), 457–477 (LLIG…PTTI), 488–508 (LTAL…SLIT), and 584–604 (IKLY…LFNL).

The protein belongs to the complex I subunit 5 family. Core subunit of respiratory chain NADH dehydrogenase (Complex I) which is composed of 45 different subunits.

The protein localises to the mitochondrion inner membrane. It catalyses the reaction a ubiquinone + NADH + 5 H(+)(in) = a ubiquinol + NAD(+) + 4 H(+)(out). In terms of biological role, core subunit of the mitochondrial membrane respiratory chain NADH dehydrogenase (Complex I) which catalyzes electron transfer from NADH through the respiratory chain, using ubiquinone as an electron acceptor. Essential for the catalytic activity and assembly of complex I. The protein is NADH-ubiquinone oxidoreductase chain 5 (MT-ND5) of Equus asinus (Donkey).